A 206-amino-acid polypeptide reads, in one-letter code: Purine nucleoside phosphorylase aq_167 (206 aa).

Zn(2+) contacts are provided by histidine 42, cysteine 78, and histidine 93.

This sequence belongs to the purine nucleoside phosphorylase YfiH/LACC1 family. As to quaternary structure, homodimer. The cofactor is Cu(2+). Requires Zn(2+) as cofactor.

It carries out the reaction adenosine + phosphate = alpha-D-ribose 1-phosphate + adenine. The enzyme catalyses S-methyl-5'-thioadenosine + phosphate = 5-(methylsulfanyl)-alpha-D-ribose 1-phosphate + adenine. It catalyses the reaction inosine + phosphate = alpha-D-ribose 1-phosphate + hypoxanthine. The catalysed reaction is adenosine + H2O + H(+) = inosine + NH4(+). In terms of biological role, purine nucleoside enzyme that catalyzes the phosphorolysis of adenosine and inosine nucleosides, yielding D-ribose 1-phosphate and the respective free bases, adenine and hypoxanthine. Also catalyzes the phosphorolysis of S-methyl-5'-thioadenosine into adenine and S-methyl-5-thio-alpha-D-ribose 1-phosphate. Also has adenosine deaminase activity. This Aquifex aeolicus (strain VF5) protein is Purine nucleoside phosphorylase aq_167.